The sequence spans 365 residues: Class I histocompatibility antigen, Gogo-C*0101/C*0102 alpha chain (365 aa).

The N-terminal stretch at 1–24 (MRVMAPRTLILLLSGALALTETWA) is a signal peptide. Residues 25 to 114 (GSHSMRYFFT…LRGYYNQSED (90 aa)) form an alpha-1 region. Over 25 to 308 (GSHSMRYFFT…EPSSQPTIPI (284 aa)) the chain is Extracellular. N-linked (GlcNAc...) asparagine glycosylation occurs at Asn-110. Residues 115-206 (GSHTFQRMYG…ENGKETLQRA (92 aa)) form an alpha-2 region. Intrachain disulfides connect Cys-125/Cys-188 and Cys-227/Cys-283. Positions 207–298 (DPPKTHVTHH…GLLEPLTLRW (92 aa)) are alpha-3. One can recognise an Ig-like C1-type domain in the interval 209–297 (PKTHVTHHPI…KGLLEPLTLR (89 aa)). Positions 299–308 (EPSSQPTIPI) are connecting peptide. Residues 309–332 (VGIVAGLAVLAVVFTGTVVAAVMC) traverse the membrane as a helical segment. Over 333 to 365 (RRKSSGGKGGSCSQAACSNSAQGSDESLIACKA) the chain is Cytoplasmic. A phosphoserine mark is found at Ser-356 and Ser-359.

The protein belongs to the MHC class I family. Heterodimer of an alpha chain and a beta chain (beta-2-microglobulin).

It is found in the membrane. In terms of biological role, involved in the presentation of foreign antigens to the immune system. This chain is Class I histocompatibility antigen, Gogo-C*0101/C*0102 alpha chain, found in Gorilla gorilla gorilla (Western lowland gorilla).